The primary structure comprises 735 residues: Delta-1-pyrroline-5-carboxylate synthase 2 (735 aa).

The tract at residues 1-315 is glutamate 5-kinase; that stretch reads MGRGGIGGAG…WGCSKEATAR (315 aa). The substrate site is built by serine 79, aspartate 176, and asparagine 195. Residues 215–216, 221–226, and 255–261 contribute to the ATP site; these read SD, YSGPPS, and RGGMQAK. Residues 316–735 are gamma-glutamyl phosphate reductase; that stretch reads EMAVAARDCS…VYTHRELPLQ (420 aa).

In the N-terminal section; belongs to the glutamate 5-kinase family. It in the C-terminal section; belongs to the gamma-glutamyl phosphate reductase family.

The enzyme catalyses L-glutamate + ATP = L-glutamyl 5-phosphate + ADP. The catalysed reaction is L-glutamate 5-semialdehyde + phosphate + NADP(+) = L-glutamyl 5-phosphate + NADPH + H(+). The protein operates within amino-acid biosynthesis; L-proline biosynthesis; L-glutamate 5-semialdehyde from L-glutamate: step 1/2. It functions in the pathway amino-acid biosynthesis; L-proline biosynthesis; L-glutamate 5-semialdehyde from L-glutamate: step 2/2. Feedback regulated by proline. In terms of biological role, P5CS plays a key role in proline biosynthesis, leading to osmoregulation in plants. Involved in abiotic stress tolerance. This chain is Delta-1-pyrroline-5-carboxylate synthase 2, found in Oryza sativa subsp. japonica (Rice).